The chain runs to 227 residues: GTP:AMP phosphotransferase AK3, mitochondrial (227 aa).

GTP contacts are provided by G17, G19, K20, G21, and T22. K20 bears the N6-succinyllysine mark. Position 29 is an N6-acetyllysine; alternate (K29). At K29 the chain carries N6-succinyllysine; alternate. K34 carries the post-translational modification N6-acetyllysine. S37 is subject to Phosphoserine. Residues 37 to 66 (SSGDLLRQNMLQGTEIAVLAKSFIDQGKLI) are NMP. The AMP site is built by S38 and R43. The residue at position 57 (K57) is an N6-succinyllysine. N6-acetyllysine; alternate occurs at positions 64 and 80. Residues K64 and K80 each carry the N6-succinyllysine; alternate modification. K64 contacts AMP. Positions 91, 94, and 98 each coordinate AMP. Positions 127 to 164 (ARWIHPASGRVYNIEFNPPKTVGIDDLTGEPLIQREDD) are LID. GTP-binding residues include R128, Y138, N139, R161, and R172. N6-acetyllysine; alternate is present on residues K174 and K189. Residues K174 and K189 each carry the N6-succinyllysine; alternate modification. Residue T201 coordinates GTP. Position 203 is an N6-acetyllysine (K203).

This sequence belongs to the adenylate kinase family. AK3 subfamily. Monomer.

It is found in the mitochondrion matrix. The catalysed reaction is a ribonucleoside 5'-triphosphate + AMP = a ribonucleoside 5'-diphosphate + ADP. The enzyme catalyses GTP + AMP = GDP + ADP. It carries out the reaction ITP + AMP = IDP + ADP. In terms of biological role, mitochondrial adenylate kinase with a specific GTP:AMP phosphotransferase activity. Could also use ITP as phosphate donor. Its physiological function is to recycle GTP into GDP which is necessary for the TCA cycle in the mitochondrial matrix. The protein is GTP:AMP phosphotransferase AK3, mitochondrial of Rattus norvegicus (Rat).